A 381-amino-acid polypeptide reads, in one-letter code: tRNA pseudouridine synthase D (381 aa).

Aspartate 81 serves as the catalytic Nucleophile. A TRUD domain is found at glycine 160 to valine 335.

Belongs to the pseudouridine synthase TruD family.

It catalyses the reaction uridine(13) in tRNA = pseudouridine(13) in tRNA. In terms of biological role, responsible for synthesis of pseudouridine from uracil-13 in transfer RNAs. This is tRNA pseudouridine synthase D from Helicobacter pylori (strain G27).